The primary structure comprises 186 residues: MLENLQGKFLIATPEIDDDYFDRTVIYICEHNSNGAMGLVINTPTDLSVLELITRMDFQMANQRNYHKDQMVLSGGPVSQDRGFIIHTKTEQEFLHSYRVTDNILLTTSGDVLDSLGKPEAPEKFIVCLGCATWKPEQLEQEIARNYWLISEANDKTLFETGYLERWVEANEMLGISGVLARAGRA.

The protein belongs to the UPF0301 (AlgH) family.

This is UPF0301 protein APL_0232 from Actinobacillus pleuropneumoniae serotype 5b (strain L20).